The chain runs to 237 residues: Large ribosomal subunit protein uL1 (237 aa).

The protein belongs to the universal ribosomal protein uL1 family. Part of the 50S ribosomal subunit.

Binds directly to 23S rRNA. The L1 stalk is quite mobile in the ribosome, and is involved in E site tRNA release. In terms of biological role, protein L1 is also a translational repressor protein, it controls the translation of the L11 operon by binding to its mRNA. The protein is Large ribosomal subunit protein uL1 of Synechococcus sp. (strain ATCC 27144 / PCC 6301 / SAUG 1402/1) (Anacystis nidulans).